The chain runs to 296 residues: MIKQYLLVTKPGIIFGNLISVVGGFLLAAKGIIDYPLFLATLVGVSLVVASGCVFNNYIDRDIDKKMERTKNRVLVKGLIAPSVTLIYATVLGIAGFVLLYIAANPLAMWLAVMGFVVYVGVYSLYMKRHSVYGTLIGSLSGAAPPVIGYCAVTNAFDAGALILLAIFSLWQMPHSYAIAIFRFKDYQAAGIPVLPVVKGVSVAKNHITLYILAFMIATLMLALVGYAGYKYLIVAAVVSIWWLGMALRGYKTENDSIWARKLFVFSIVAITSLSVMMSIDFSVSSASPALLTYVW.

Transmembrane regions (helical) follow at residues 13 to 33 (IIFG…KGII), 35 to 55 (YPLF…GCVF), 84 to 104 (VTLI…YIAA), 107 to 127 (LAMW…SLYM), 132 to 152 (VYGT…GYCA), 162 to 182 (LILL…IAIF), 208 to 228 (ITLY…VGYA), 229 to 249 (GYKY…MALR), and 264 to 284 (FVFS…DFSV).

The protein belongs to the UbiA prenyltransferase family. Protoheme IX farnesyltransferase subfamily.

The protein resides in the cell inner membrane. The catalysed reaction is heme b + (2E,6E)-farnesyl diphosphate + H2O = Fe(II)-heme o + diphosphate. Its pathway is porphyrin-containing compound metabolism; heme O biosynthesis; heme O from protoheme: step 1/1. Converts heme B (protoheme IX) to heme O by substitution of the vinyl group on carbon 2 of heme B porphyrin ring with a hydroxyethyl farnesyl side group. The chain is Protoheme IX farnesyltransferase from Edwardsiella ictaluri (strain 93-146).